The chain runs to 545 residues: T-complex protein 1 subunit gamma (545 aa).

Methionine 1 carries the post-translational modification N-acetylmethionine. The tract at residues 1–24 (MMGHRPVLVLSQNTKRESGRKVQS) is disordered. Serine 11 is subject to Phosphoserine. A Glycyl lysine isopeptide (Lys-Gly) (interchain with G-Cter in SUMO2) cross-link involves residue lysine 15. An ADP-binding site is contributed by glycine 42. Glycine 42 is an ATP binding site. Aspartate 93 contributes to the Mg(2+) binding site. ADP is bound by residues glycine 94, threonine 95, threonine 96, serine 97, threonine 162, and lysine 163. 3 residues coordinate ATP: glycine 94, threonine 95, and threonine 96. A Phosphoserine modification is found at serine 170. Lysine 222 bears the N6-acetyllysine mark. Phosphoserine occurs at positions 243 and 244. Residue tyrosine 247 is modified to Phosphotyrosine. Glycyl lysine isopeptide (Lys-Gly) (interchain with G-Cter in SUMO2) cross-links involve residues lysine 248 and lysine 249. Residue serine 252 is modified to Phosphoserine. Cysteine 366 and cysteine 372 are oxidised to a cystine. Lysine 381 participates in a covalent cross-link: Glycyl lysine isopeptide (Lys-Gly) (interchain with G-Cter in SUMO2). Glycine 411 is a binding site for ADP. Glycine 411 is a binding site for ATP. Phosphothreonine is present on residues threonine 430 and threonine 459. ADP is bound by residues glycine 482, glutamate 483, glutamate 497, and lysine 502. Glycine 482 is an ATP binding site. Glutamate 497 contacts ATP. Residues 526–545 (HKKKGDDQNRQTGAPDAGQE) form a disordered region.

It belongs to the TCP-1 chaperonin family. Component of the chaperonin-containing T-complex (TRiC), a hexadecamer composed of two identical back-to-back stacked rings enclosing a protein folding chamber. Each ring is made up of eight different subunits: TCP1/CCT1, CCT2, CCT3, CCT4, CCT5, CCT6A/CCT6, CCT7, CCT8. Interacts with PACRG. Interacts with DNAAF4. Interacts with DLEC1.

It localises to the cytoplasm. The enzyme catalyses ATP + H2O = ADP + phosphate + H(+). In terms of biological role, component of the chaperonin-containing T-complex (TRiC), a molecular chaperone complex that assists the folding of actin, tubulin and other proteins upon ATP hydrolysis. The TRiC complex mediates the folding of WRAP53/TCAB1, thereby regulating telomere maintenance. As part of the TRiC complex may play a role in the assembly of BBSome, a complex involved in ciliogenesis regulating transports vesicles to the cilia. This Rattus norvegicus (Rat) protein is T-complex protein 1 subunit gamma (Cct3).